The primary structure comprises 144 residues: Putative pre-16S rRNA nuclease (144 aa).

It belongs to the YqgF nuclease family.

It localises to the cytoplasm. Functionally, could be a nuclease involved in processing of the 5'-end of pre-16S rRNA. This Wigglesworthia glossinidia brevipalpis protein is Putative pre-16S rRNA nuclease.